A 251-amino-acid chain; its full sequence is Membrane-anchored junction protein (251 aa).

The Nuclear segment spans residues 1–227 (MSLKPFTYPF…HSNPPPLKEP (227 aa)). Positions 140-225 (RKRKLMEEPS…LEHSNPPPLK (86 aa)) are disordered. Residues 183–198 (EDSQQDTPASDSTAVT) are compositionally biased toward polar residues. Residues 228-246 (AARGFLGFLSALFPFRYFF) form a helical membrane-spanning segment. Topologically, residues 247–251 (RKSTQ) are perinuclear space.

The protein belongs to the MAJIN family. In terms of assembly, component of the MAJIN-TERB1-TERB2 complex, composed of MAJIN, TERB1 and TERB2.

Its subcellular location is the nucleus inner membrane. The protein localises to the chromosome. It localises to the telomere. Functionally, meiosis-specific telomere-associated protein involved in meiotic telomere attachment to the nucleus inner membrane, a crucial step for homologous pairing and synapsis. Component of the MAJIN-TERB1-TERB2 complex, which promotes telomere cap exchange by mediating attachment of telomeric DNA to the inner nuclear membrane and replacement of the protective cap of telomeric chromosomes: in early meiosis, the MAJIN-TERB1-TERB2 complex associates with telomeric DNA and the shelterin/telosome complex. During prophase, the complex matures and promotes release of the shelterin/telosome complex from telomeric DNA. In the complex, MAJIN acts as the anchoring subunit to the nucleus inner membrane. MAJIN shows DNA-binding activity, possibly for the stabilization of telomere attachment on the nucleus inner membrane. The sequence is that of Membrane-anchored junction protein from Rattus norvegicus (Rat).